Here is a 227-residue protein sequence, read N- to C-terminus: UPF0173 metal-dependent hydrolase BCE33L4354 (227 aa).

Belongs to the UPF0173 family.

The sequence is that of UPF0173 metal-dependent hydrolase BCE33L4354 from Bacillus cereus (strain ZK / E33L).